The sequence spans 599 residues: Glutamine--fructose-6-phosphate aminotransferase [isomerizing] (599 aa).

Residue C2 is the Nucleophile; for GATase activity of the active site. The 222-residue stretch at 2–223 (CGIIGYIGNE…DRDIVILRKE (222 aa)) folds into the Glutamine amidotransferase type-2 domain. SIS domains follow at residues 286-423 (LGKE…IIGK) and 452-589 (IAEE…VDKP). K594 acts as the For Fru-6P isomerization activity in catalysis.

In terms of assembly, homodimer.

It is found in the cytoplasm. The enzyme catalyses D-fructose 6-phosphate + L-glutamine = D-glucosamine 6-phosphate + L-glutamate. Functionally, catalyzes the first step in hexosamine metabolism, converting fructose-6P into glucosamine-6P using glutamine as a nitrogen source. The polypeptide is Glutamine--fructose-6-phosphate aminotransferase [isomerizing] (glmS) (Methanococcus maripaludis (strain DSM 14266 / JCM 13030 / NBRC 101832 / S2 / LL)).